We begin with the raw amino-acid sequence, 340 residues long: Myomesin-1 (340 aa).

The tract at residues Ala177–Arg212 is disordered. Over residues Thr197–Gly206 the composition is skewed to acidic residues.

In terms of assembly, homodimer. Interacts with TTN/titin and PNKD. Seems to be expressed in all cardiac and skeletal fibers.

Its subcellular location is the cytoplasm. It localises to the myofibril. It is found in the sarcomere. The protein localises to the m line. Functionally, major component of the vertebrate myofibrillar M band. Binds myosin, titin, and light meromyosin. This binding is dose dependent. This Bos taurus (Bovine) protein is Myomesin-1 (MYOM1).